A 318-amino-acid chain; its full sequence is Aldehyde oxidoreductase FAD-binding subunit PaoB (318 aa).

Residues 1-223 form the FAD-binding PCMH-type domain; the sequence is MKAFTYERVN…VAVTLPPPLG (223 aa). Residues 26–34 and threonine 108 contribute to the FAD site; that span reads KFIAGGTNL. Residues cysteine 119, cysteine 129, cysteine 138, and cysteine 157 each contribute to the [4Fe-4S] cluster site. Aspartate 164, isoleucine 213, and lysine 230 together coordinate FAD.

In terms of assembly, heterotrimer composed of PaoA, PaoB and PaoC. The cofactor is FAD. It depends on [4Fe-4S] cluster as a cofactor.

Its subcellular location is the periplasm. It catalyses the reaction an aldehyde + A + H2O = a carboxylate + AH2 + H(+). With respect to regulation, the complex requires PaoD for activity. Functionally, oxidizes aldehydes to the corresponding carboxylic acids with a preference for aromatic aldehydes. It might play a role in the detoxification of aldehydes to avoid cell damage. This Escherichia coli (strain K12) protein is Aldehyde oxidoreductase FAD-binding subunit PaoB.